A 623-amino-acid chain; its full sequence is MDDQNKNLILATGLSFLVIMVWFFLFPPPEAVTEGEPTVATQQTAVAPSATPDAPTTAVPPDADLPETRRVAIDTPRLQGSISMLGGRLDDLSLKSYHETLDPQSQIVRLLSPVGQPNAYYALYGWTPAGALGYEDVPGANTTWTQVGSGALGVDQPVTLQWDNGKGLVFTRTISVDDHYMFSVAQTVENNSGQAVQLAPYGIVARHGKPLNLQNFFVLHEGVVGRADGKLTETKYDKVAELPQVAREGAQAEVIDAQQDGWIGFTDKYWMTTLIPQQGQPFTSVTKYVPGADIYQAETREQLVTVAPGATAEVSSRLFAGAKEWETIRAYQNEGATEPTEGAEPIPGFIDSIDWGWFFFLTKPIFTVLHWLNHMIGNMGLAIIALTFLLKALVLPLAYKSYVSMARMKELQPELEALRERAGDDKMLMQREMMRLYKEKQVNPAAGCLPILIQIPIFFSLYKVIFVTIELRHAPFFGWLKDLSAPDPSSIFNFFGLAPWAAPTPGTTMALIFIGALPILLGVSMWLQQKLNPAPGDKAQAMIFAWMPWVFMFMLGHFASGLVLYWIVNNLITFTQQYVIMRSHGHHPDIFGNIKASFSRKPAAQPAGKAANDGAAPAKKRKP.

A helical transmembrane segment spans residues 8–28 (LILATGLSFLVIMVWFFLFPP). A disordered region spans residues 33–64 (TEGEPTVATQQTAVAPSATPDAPTTAVPPDAD). Low complexity predominate over residues 44 to 62 (TAVAPSATPDAPTTAVPPD). 4 helical membrane passes run 379-399 (MGLA…PLAY), 449-469 (LPIL…FVTI), 507-527 (TTMA…SMWL), and 543-563 (IFAW…SGLV). Over residues 601–617 (KPAAQPAGKAANDGAAP) the composition is skewed to low complexity. Positions 601-623 (KPAAQPAGKAANDGAAPAKKRKP) are disordered.

It belongs to the OXA1/ALB3/YidC family. Type 1 subfamily. Interacts with the Sec translocase complex via SecD. Specifically interacts with transmembrane segments of nascent integral membrane proteins during membrane integration.

It localises to the cell inner membrane. Required for the insertion and/or proper folding and/or complex formation of integral membrane proteins into the membrane. Involved in integration of membrane proteins that insert both dependently and independently of the Sec translocase complex, as well as at least some lipoproteins. Aids folding of multispanning membrane proteins. The sequence is that of Membrane protein insertase YidC from Cereibacter sphaeroides (strain KD131 / KCTC 12085) (Rhodobacter sphaeroides).